The sequence spans 494 residues: ATP synthase subunit alpha 1 (494 aa).

It belongs to the ATPase alpha/beta chains family. F-type ATPases have 2 components, CF(1) - the catalytic core - and CF(0) - the membrane proton channel. CF(1) has five subunits: alpha(3), beta(3), gamma(1), delta(1), epsilon(1). CF(0) has three main subunits: a(1), b(2) and c(9-12). The alpha and beta chains form an alternating ring which encloses part of the gamma chain. CF(1) is attached to CF(0) by a central stalk formed by the gamma and epsilon chains, while a peripheral stalk is formed by the delta and b chains.

The protein resides in the cell inner membrane. It carries out the reaction ATP + H2O + 4 H(+)(in) = ADP + phosphate + 5 H(+)(out). Its function is as follows. Produces ATP from ADP in the presence of a proton gradient across the membrane. The alpha chain is a regulatory subunit. The sequence is that of ATP synthase subunit alpha 1 from Hahella chejuensis (strain KCTC 2396).